Here is a 547-residue protein sequence, read N- to C-terminus: Membrane protein insertase YidC (547 aa).

A run of 6 helical transmembrane segments spans residues 6–26 (LILV…WQKY), 328–348 (VVDY…LEAI), 351–371 (LVGN…AVFF), 425–445 (LPIL…LGAV), 459–479 (LASA…MFVQ), and 499–519 (PLIF…YWVV).

Belongs to the OXA1/ALB3/YidC family. Type 1 subfamily. In terms of assembly, interacts with the Sec translocase complex via SecD. Specifically interacts with transmembrane segments of nascent integral membrane proteins during membrane integration.

The protein resides in the cell inner membrane. In terms of biological role, required for the insertion and/or proper folding and/or complex formation of integral membrane proteins into the membrane. Involved in integration of membrane proteins that insert both dependently and independently of the Sec translocase complex, as well as at least some lipoproteins. Aids folding of multispanning membrane proteins. The polypeptide is Membrane protein insertase YidC (Dechloromonas aromatica (strain RCB)).